A 1166-amino-acid polypeptide reads, in one-letter code: Topoisomerase 1-associated factor 1 (1166 aa).

4 disordered regions span residues 333–358 (KMDESKKWNRPQPRKTHEDSVLNNDF), 564–594 (QVRSRRRSRRKNMETQVAAPEDNNEEHASDD), 881–981 (DPYT…RARL), and 1023–1145 (ALLT…DENA). Residues 585 to 594 (DNNEEHASDD) are compositionally biased toward acidic residues. Over residues 881–893 (DPYTGDIEHDPRQ) the composition is skewed to basic and acidic residues. Over residues 916–926 (FGSESEGEDVP) the composition is skewed to acidic residues. Residues 966–981 (LEARRKARQENTRARL) show a composition bias toward basic and acidic residues. A compositionally biased stretch (acidic residues) spans 1087 to 1107 (TEDDENTSATSDEDDEFDFDD). The segment covering 1109–1142 (LAFRRDRDLDRDPVLPSHAEDMQPTDTRELRDND) has biased composition (basic and acidic residues).

This sequence belongs to the timeless family.

The protein localises to the nucleus. Its function is as follows. Involved in chromosome segregation during meiosis and DNA damage repair. The chain is Topoisomerase 1-associated factor 1 (tof1) from Aspergillus oryzae (strain ATCC 42149 / RIB 40) (Yellow koji mold).